The following is a 344-amino-acid chain: MKKRIAIVLFNLGGPKNLESVKPFLFNLFYDKAIINLPNPFRYIIAKIISTTRERKSQKIYSLIGGKSSLLQETEEQKLALTEKLKQLIKEDFAIFINMRYSAPFAKEVIDQIKKYNPSEIILLPLYPQFSSTTTGSSVKNFLQNFDIDISIKTICCYPQEEDFIKSHVSLIKEKLYDDDKNFRILFSAHGLPEKIIKAGDPYSFQIKETVKAIVKELNIKDLDYKITYQSRVGPIEWLKPNTEDEIELAGKLKKDIIIVPISFVSEHVETLVELDIEYKLIADKYEVQYTRIPTLGTNKIFINSLTNILLQFINKVDTNLVTSSSSTRICPNEFTKCLCKLTN.

Histidine 190 and glutamate 270 together coordinate Fe cation.

This sequence belongs to the ferrochelatase family.

It is found in the cytoplasm. The catalysed reaction is heme b + 2 H(+) = protoporphyrin IX + Fe(2+). Its pathway is porphyrin-containing compound metabolism; protoheme biosynthesis; protoheme from protoporphyrin-IX: step 1/1. Functionally, catalyzes the ferrous insertion into protoporphyrin IX. The protein is Ferrochelatase of Rickettsia felis (strain ATCC VR-1525 / URRWXCal2) (Rickettsia azadi).